Consider the following 197-residue polypeptide: Imidazoleglycerol-phosphate dehydratase (197 aa).

It belongs to the imidazoleglycerol-phosphate dehydratase family.

It is found in the cytoplasm. The enzyme catalyses D-erythro-1-(imidazol-4-yl)glycerol 3-phosphate = 3-(imidazol-4-yl)-2-oxopropyl phosphate + H2O. The protein operates within amino-acid biosynthesis; L-histidine biosynthesis; L-histidine from 5-phospho-alpha-D-ribose 1-diphosphate: step 6/9. The protein is Imidazoleglycerol-phosphate dehydratase of Laribacter hongkongensis (strain HLHK9).